The following is a 147-amino-acid chain: D-aminoacyl-tRNA deacylase (147 aa).

Positions 137 to 138 (GP) match the Gly-cisPro motif, important for rejection of L-amino acids motif.

It belongs to the DTD family. In terms of assembly, homodimer.

The protein resides in the cytoplasm. It catalyses the reaction glycyl-tRNA(Ala) + H2O = tRNA(Ala) + glycine + H(+). The enzyme catalyses a D-aminoacyl-tRNA + H2O = a tRNA + a D-alpha-amino acid + H(+). An aminoacyl-tRNA editing enzyme that deacylates mischarged D-aminoacyl-tRNAs. Also deacylates mischarged glycyl-tRNA(Ala), protecting cells against glycine mischarging by AlaRS. Acts via tRNA-based rather than protein-based catalysis; rejects L-amino acids rather than detecting D-amino acids in the active site. By recycling D-aminoacyl-tRNA to D-amino acids and free tRNA molecules, this enzyme counteracts the toxicity associated with the formation of D-aminoacyl-tRNA entities in vivo and helps enforce protein L-homochirality. This Bacillus velezensis (strain DSM 23117 / BGSC 10A6 / LMG 26770 / FZB42) (Bacillus amyloliquefaciens subsp. plantarum) protein is D-aminoacyl-tRNA deacylase.